The chain runs to 145 residues: Bacilliredoxin Acid345_1880 (145 aa).

This sequence belongs to the bacilliredoxin family.

This chain is Bacilliredoxin Acid345_1880, found in Koribacter versatilis (strain Ellin345).